We begin with the raw amino-acid sequence, 444 residues long: Ribosome biogenesis protein YTM1 (444 aa).

The tract at residues 8-89 (VKLRFFTREE…ETFLNVEYTR (82 aa)) is ubiquitin-like (UBL) domain. WD repeat units lie at residues 99–138 (SFDN…EKQY), 140–178 (GHSG…LKSI), 194–231 (GHKA…MTVI), 269–309 (SHSA…CVDT), 311–350 (TTSY…SSKI), 357–397 (GHKN…AMYT), and 408–444 (GVND…IFSN). Residues 99–444 (SFDNEDWVSS…INKGDNIFSN (346 aa)) form a sufficient for interaction with ERB1 and association with 66S pre-ribosomes region.

The protein belongs to the WD repeat WDR12/YTM1 family. Component of the NOP7 complex, composed of ERB1, NOP7 and YTM1. The complex is held together by ERB1, which interacts with NOP7 via its N-terminal domain and with YTM1 via a high-affinity interaction between the seven-bladed beta-propeller domains of the 2 proteins. The NOP7 complex associates with the 66S pre-ribosome. Interacts (via UBL domain) with MDN1 (via VWFA/MIDAS domain).

The protein resides in the nucleus. It localises to the nucleolus. It is found in the nucleoplasm. Its function is as follows. Component of the NOP7 complex, which is required for maturation of the 25S and 5.8S ribosomal RNAs and formation of the 60S ribosome. The protein is Ribosome biogenesis protein YTM1 of Kluyveromyces lactis (strain ATCC 8585 / CBS 2359 / DSM 70799 / NBRC 1267 / NRRL Y-1140 / WM37) (Yeast).